Here is a 220-residue protein sequence, read N- to C-terminus: Serine protease-like protein 51 (220 aa).

The N-terminal stretch at 1 to 16 is a signal peptide; it reads MFQLLIPLLLALKGHA. The region spanning 23-220 is the Peptidase S1 domain; the sequence is VQCGHRPAFP…SSKWVSSVGA (198 aa). An N-linked (GlcNAc...) asparagine glycan is attached at Asn-33. Cys-64 and Cys-80 are oxidised to a cystine. Asn-92 is a glycosylation site (N-linked (GlcNAc...) asparagine). An intrachain disulfide couples Cys-157 to Cys-170.

Belongs to the peptidase S1 family.

The protein resides in the secreted. The chain is Serine protease-like protein 51 from Homo sapiens (Human).